A 398-amino-acid polypeptide reads, in one-letter code: Na(+)/H(+) antiporter NhaA (398 aa).

12 helical membrane-spanning segments follow: residues Ala-21–Leu-41, Leu-56–Leu-76, Val-94–Ile-114, Gly-124–Gly-144, Val-153–Phe-173, Ser-176–Leu-196, Val-201–Ser-221, Ile-263–Gly-283, Leu-284–Gly-304, Leu-306–Ala-326, Met-333–Leu-353, and Val-367–Ala-387.

The protein belongs to the NhaA Na(+)/H(+) (TC 2.A.33) antiporter family.

Its subcellular location is the cell inner membrane. It carries out the reaction Na(+)(in) + 2 H(+)(out) = Na(+)(out) + 2 H(+)(in). Na(+)/H(+) antiporter that extrudes sodium in exchange for external protons. The protein is Na(+)/H(+) antiporter NhaA of Mesorhizobium japonicum (strain LMG 29417 / CECT 9101 / MAFF 303099) (Mesorhizobium loti (strain MAFF 303099)).